Here is a 1441-residue protein sequence, read N- to C-terminus: Cleavage and polyadenylation specificity factor subunit 1 (1441 aa).

Disordered stretches follow at residues 404-435 (PASSVREAADKEEPPSKKKRVEPAVGWTGGKT), 545-569 (EEETPKAESTEQEPSAPKAEEDGRR), 713-775 (GGAR…PAPF), and 899-921 (FREKKPKPSKKKAEGCSTEEGSG). Positions 410 to 419 (EAADKEEPPS) are enriched in basic and acidic residues. Residues Ser754 and Ser764 each carry the phosphoserine modification. Residues 756 to 773 (SKEEARRSSQPPADRDPA) show a composition bias toward basic and acidic residues.

It belongs to the CPSF1 family. As to quaternary structure, component of the cleavage and polyadenylation specificity factor (CPSF) complex, composed of CPSF1, CPSF2, CPSF3, CPSF4 and FIP1L1. Found in a complex with CPSF1, FIP1L1 and PAPOLA. Interacts with FIP1L1 and SRRM1. Interacts with TUT1; the interaction is direct and mediates the recruitment of the CPSF complex on the 3'UTR of selected pre-mRNAs. Interacts with TENT2/GLD2.

Its subcellular location is the nucleus. The protein resides in the nucleoplasm. Component of the cleavage and polyadenylation specificity factor (CPSF) complex that plays a key role in pre-mRNA 3'-end formation, recognizing the AAUAAA signal sequence and interacting with poly(A) polymerase and other factors to bring about cleavage and poly(A) addition. This subunit is involved in the RNA recognition step of the polyadenylation reaction. May play a role in eye morphogenesis and the development of retinal ganglion cell projections to the midbrain. In Mus musculus (Mouse), this protein is Cleavage and polyadenylation specificity factor subunit 1 (Cpsf1).